The following is a 100-amino-acid chain: Urease subunit gamma (100 aa).

Belongs to the urease gamma subunit family. In terms of assembly, heterotrimer of UreA (gamma), UreB (beta) and UreC (alpha) subunits. Three heterotrimers associate to form the active enzyme.

It is found in the cytoplasm. The enzyme catalyses urea + 2 H2O + H(+) = hydrogencarbonate + 2 NH4(+). Its pathway is nitrogen metabolism; urea degradation; CO(2) and NH(3) from urea (urease route): step 1/1. The chain is Urease subunit gamma from Prochlorococcus marinus (strain MIT 9301).